Reading from the N-terminus, the 292-residue chain is Peroxisomal 2,4-dienoyl-CoA reductase [(3E)-enoyl-CoA-producing] (292 aa).

NADP(+) is bound by residues 35–40 (GGGSGI), 60–64 (RSLPR), and aspartate 86. A substrate-binding site is contributed by arginine 60. Substrate is bound by residues arginine 88, phenylalanine 118, and 126–128 (SFN). Lysine 151 bears the N6-acetyllysine mark. NADP(+) is bound by residues lysine 182 and 208–214 (PGAISGT). Residue arginine 219 participates in substrate binding. Serine 287 bears the Phosphoserine mark. The short motif at 290–292 (AKL) is the Microbody targeting signal element. Lysine 291 carries the post-translational modification N6-acetyllysine.

Belongs to the short-chain dehydrogenases/reductases (SDR) family. 2,4-dienoyl-CoA reductase subfamily. Monomer, dimer and oligomer.

The protein resides in the peroxisome. It carries out the reaction a (2E,4Z)-dienoyl-CoA + NADPH + H(+) = a 4,5-saturated-(3E)-enoyl-CoA + NADP(+). It catalyses the reaction a (2E,4E)-dienoyl-CoA + NADPH + H(+) = a 4,5-saturated-(3E)-enoyl-CoA + NADP(+). The enzyme catalyses (2E,4E)-hexadienoyl-CoA + NADPH + H(+) = (3E)-hexenoyl-CoA + NADP(+). The catalysed reaction is (2E,4E)-decadienoyl-CoA + NADPH + H(+) = (3E)-decenoyl-CoA + NADP(+). It carries out the reaction (2E,4Z,7Z,10Z,13Z,16Z,19Z)-docosaheptaenoyl-CoA + NADPH + H(+) = (3E,7Z,10Z,13Z,16Z,19Z)-docosahexaenoyl-CoA + NADP(+). In terms of biological role, auxiliary enzyme of beta-oxidation. Participates in the degradation of unsaturated fatty enoyl-CoA esters having double bonds in both even- and odd-numbered positions in peroxisome. Catalyzes the NADP-dependent reduction of 2,4-dienoyl-CoA to yield trans-3-enoyl-CoA. Has activity towards short and medium chain 2,4-dienoyl-CoAs, but also towards 2,4,7,10,13,16,19-docosaheptaenoyl-CoA, suggesting that it does not constitute a rate limiting step in the peroxisomal degradation of docosahexaenoic acid. This Rattus norvegicus (Rat) protein is Peroxisomal 2,4-dienoyl-CoA reductase [(3E)-enoyl-CoA-producing] (Decr2).